A 109-amino-acid chain; its full sequence is MIMQKRLLNRNSSVVKSRNCLARHQHESSISKLHVSLRLHRCLRPIVRFDFLHNAGSKVCSQNSCPSPQLHVGTMALFHTVFILWPHFCGILWTVHEKLYNYLLSIEVY.

A helical transmembrane segment spans residues 75–95 (MALFHTVFILWPHFCGILWTV).

The protein resides in the membrane. This is an uncharacterized protein from Saccharomyces cerevisiae (strain ATCC 204508 / S288c) (Baker's yeast).